Reading from the N-terminus, the 25-residue chain is Putative cytochrome c4 (25 aa).

Positions 1-25 (QEDIEAGKQKSATCTACHGQEGNST) are disordered. Residues Cys14 and Cys17 each contribute to the heme site.

Binds 2 heme groups per subunit.

The protein resides in the periplasm. Its function is as follows. Diheme, high potential cytochrome c believed to be an intermediate electron donor to terminal oxidation systems. In Aliivibrio fischeri (Vibrio fischeri), this protein is Putative cytochrome c4.